Here is a 277-residue protein sequence, read N- to C-terminus: Putative thiosulfate sulfurtransferase (277 aa).

2 consecutive Rhodanese domains span residues 18 to 125 (DSAN…PLST) and 154 to 274 (SIKI…VPIE). Cys233 functions as the Cysteine persulfide intermediate in the catalytic mechanism. Substrate is bound at residue Arg238.

The catalysed reaction is thiosulfate + hydrogen cyanide = thiocyanate + sulfite + 2 H(+). May be a sulfotransferase involved in the formation of thiosulfate. The chain is Putative thiosulfate sulfurtransferase (cysA) from Mycobacterium leprae (strain TN).